Here is a 474-residue protein sequence, read N- to C-terminus: Bifunctional protein GlmU (474 aa).

The segment at 1–232 (MSALDVIIMA…ALQVAGVNSP (232 aa)) is pyrophosphorylase. UDP-N-acetyl-alpha-D-glucosamine contacts are provided by residues Lys23, Gln78, 83–84 (GT), 105–107 (SGD), Gly142, Glu157, and Asn230. A Mg(2+)-binding site is contributed by Asp107. Position 230 (Asn230) interacts with Mg(2+). The linker stretch occupies residues 233-253 (LQLAELERAHQLAQARALMEQ). An N-acetyltransferase region spans residues 254-474 (GVRLADPARF…WQRPAKLPKA (221 aa)). 2 residues coordinate UDP-N-acetyl-alpha-D-glucosamine: Arg349 and Lys367. His379 acts as the Proton acceptor in catalysis. Residues Tyr382 and Asn393 each coordinate UDP-N-acetyl-alpha-D-glucosamine. Residues Ala396, 402–403 (NY), Ser421, Gly439, and Arg456 each bind acetyl-CoA. The disordered stretch occupies residues 454–474 (VARGKQVTKENWQRPAKLPKA).

This sequence in the N-terminal section; belongs to the N-acetylglucosamine-1-phosphate uridyltransferase family. In the C-terminal section; belongs to the transferase hexapeptide repeat family. Homotrimer. It depends on Mg(2+) as a cofactor.

The protein resides in the cytoplasm. The enzyme catalyses alpha-D-glucosamine 1-phosphate + acetyl-CoA = N-acetyl-alpha-D-glucosamine 1-phosphate + CoA + H(+). The catalysed reaction is N-acetyl-alpha-D-glucosamine 1-phosphate + UTP + H(+) = UDP-N-acetyl-alpha-D-glucosamine + diphosphate. It participates in nucleotide-sugar biosynthesis; UDP-N-acetyl-alpha-D-glucosamine biosynthesis; N-acetyl-alpha-D-glucosamine 1-phosphate from alpha-D-glucosamine 6-phosphate (route II): step 2/2. Its pathway is nucleotide-sugar biosynthesis; UDP-N-acetyl-alpha-D-glucosamine biosynthesis; UDP-N-acetyl-alpha-D-glucosamine from N-acetyl-alpha-D-glucosamine 1-phosphate: step 1/1. The protein operates within bacterial outer membrane biogenesis; LPS lipid A biosynthesis. In terms of biological role, catalyzes the last two sequential reactions in the de novo biosynthetic pathway for UDP-N-acetylglucosamine (UDP-GlcNAc). The C-terminal domain catalyzes the transfer of acetyl group from acetyl coenzyme A to glucosamine-1-phosphate (GlcN-1-P) to produce N-acetylglucosamine-1-phosphate (GlcNAc-1-P), which is converted into UDP-GlcNAc by the transfer of uridine 5-monophosphate (from uridine 5-triphosphate), a reaction catalyzed by the N-terminal domain. The polypeptide is Bifunctional protein GlmU (Paracidovorax citrulli (strain AAC00-1) (Acidovorax citrulli)).